The following is a 522-amino-acid chain: MKYIQAFMNNFLGNSPDWYKVTIGVFLVINPFIFWFHPFIAGWLLVAEFIFTLAMALKCYPLQPGGMLALEAVTIGMTSPEHVKAEILANFEVILLLMFMVAGIYFMKQLLLYAFTKLLLRIRSKLTLSLAFCLTAAFLSAFLDALTVIAVIISVAMGFYGVYHKVASGGTFNDPSDITNDAKIKQNMETLEQFRAFLRSLMMHAAVGTALGGVMTLVGEPQNLIIAEQAGWGFKEFFFRMSPVTLLTLISGVVTCITVERLRLCGYGEKLPRKVWGVLAKFDRAHEEQMTTQDRVKLGVQVFVGIWLIIGLAFHLASVGLIGLTVIILTTAYCGITDEHAIGRAFQESLPFLSLLVVFFSVVAVIIDQHLFAPVIELVLNASESVQLLLFYIFNGVLSAISDNVFVATVYINEAKNALTAGAISPYQFEMISVAINTGTNLPSVATPNGQAAFLFLLTSSISPLIRLSYGRMVYMALPYTIVLSIVGLLAVEYVLPGMTQWLAQVGLIESPHIPMTSVFGH.

11 helical membrane passes run 25–45, 49–69, 87–107, 128–162, 201–221, 237–257, 302–322, 356–376, 388–408, 446–466, and 476–496; these read VFLVINPFIFWFHPFIAGWLL, FIFTLAMALKCYPLQPGGMLA, ILANFEVILLLMFMVAGIYFM, LSLAFCLTAAFLSAFLDALTVIAVIISVAMGFYGV, LMMHAAVGTALGGVMTLVGEP, FFFRMSPVTLLTLISGVVTCI, VFVGIWLIIGLAFHLASVGLI, LVVFFSVVAVIIDQHLFAPVI, LLLFYIFNGVLSAISDNVFVA, ATPNGQAAFLFLLTSSISPLI, and MALPYTIVLSIVGLLAVEYVL.

This sequence belongs to the NhaB Na(+)/H(+) (TC 2.A.34) antiporter family.

The protein resides in the cell inner membrane. The enzyme catalyses 2 Na(+)(in) + 3 H(+)(out) = 2 Na(+)(out) + 3 H(+)(in). Na(+)/H(+) antiporter that extrudes sodium in exchange for external protons. The chain is Na(+)/H(+) antiporter NhaB from Actinobacillus succinogenes (strain ATCC 55618 / DSM 22257 / CCUG 43843 / 130Z).